The chain runs to 256 residues: GTP cyclohydrolase FolE2 (256 aa).

Belongs to the GTP cyclohydrolase IV family.

It carries out the reaction GTP + H2O = 7,8-dihydroneopterin 3'-triphosphate + formate + H(+). Its pathway is cofactor biosynthesis; 7,8-dihydroneopterin triphosphate biosynthesis; 7,8-dihydroneopterin triphosphate from GTP: step 1/1. In terms of biological role, converts GTP to 7,8-dihydroneopterin triphosphate. The polypeptide is GTP cyclohydrolase FolE2 (Maridesulfovibrio salexigens (strain ATCC 14822 / DSM 2638 / NCIMB 8403 / VKM B-1763) (Desulfovibrio salexigens)).